Here is a 274-residue protein sequence, read N- to C-terminus: 4-diphosphocytidyl-2-C-methyl-D-erythritol kinase (274 aa).

Lys-8 is an active-site residue. 94–104 (PSGAGLGGGSS) provides a ligand contact to ATP. Asp-136 is a catalytic residue.

The protein belongs to the GHMP kinase family. IspE subfamily.

It catalyses the reaction 4-CDP-2-C-methyl-D-erythritol + ATP = 4-CDP-2-C-methyl-D-erythritol 2-phosphate + ADP + H(+). It participates in isoprenoid biosynthesis; isopentenyl diphosphate biosynthesis via DXP pathway; isopentenyl diphosphate from 1-deoxy-D-xylulose 5-phosphate: step 3/6. In terms of biological role, catalyzes the phosphorylation of the position 2 hydroxy group of 4-diphosphocytidyl-2C-methyl-D-erythritol. In Bacteroides thetaiotaomicron (strain ATCC 29148 / DSM 2079 / JCM 5827 / CCUG 10774 / NCTC 10582 / VPI-5482 / E50), this protein is 4-diphosphocytidyl-2-C-methyl-D-erythritol kinase.